A 476-amino-acid chain; its full sequence is Ribulose bisphosphate carboxylase/oxygenase activase 1, chloroplastic (476 aa).

The transit peptide at 1 to 56 directs the protein to the chloroplast; it reads MAAAYSTVGAVNRAPLSLNGSGARASLVPSTAFFGSSLKKSAAKFPKASSGNFKIV. 165 to 172 contributes to the ATP binding site; the sequence is GGKGQGKS.

This sequence belongs to the RuBisCO activase family.

Its subcellular location is the plastid. The protein resides in the chloroplast stroma. Activation of RuBisCO (ribulose-1,5-bisphosphate carboxylase/oxygenase; EC 4.1.1.39) involves the ATP-dependent carboxylation of the epsilon-amino group of lysine leading to a carbamate structure. The chain is Ribulose bisphosphate carboxylase/oxygenase activase 1, chloroplastic (RCA1) from Larrea tridentata (Creosote bush).